The chain runs to 274 residues: Thiamine kinase (274 aa).

This sequence belongs to the thiamine kinase family.

It carries out the reaction thiamine + ATP = thiamine phosphate + ADP + H(+). It participates in cofactor biosynthesis; thiamine diphosphate biosynthesis; thiamine phosphate from thiamine: step 1/1. Catalyzes the ATP-dependent phosphorylation of thiamine to thiamine phosphate. Is involved in thiamine salvage. The sequence is that of Thiamine kinase from Salmonella typhi.